Consider the following 415-residue polypeptide: MFNRTTSTVANVDPELYAAIEQENRRQEDHIELIASENYTSPAVMAAQGSQLTNKYAEGYPGKRYYGGCEYVDVVEQLAIDRVKQLFGAEAANVQPNSGSQANQGVFFAMLKPGDTIMGMSLAHGGHLTHGSPVNMSGKWFNVVSYGLNENEDIDYEAAEQLAQEHKPKLIVAGASAFSLKIDFERLAKIAKSVGAYLMVDMAHYAGLIAAGVYPNPVPHADFVTTTTHKSLRGPRGGVILMKAEYEKPINSAIFPGIQGGPLMHVIAGKAVAFKEALSPEFKAYQEKVVENARVLAETLVKRGLRIVSGRTESHVMLVDLRAKNITGKAAEAALGAAHITVNKNAIPNDPEKPFVTSGVRLGSPAMTTRGFGVKEAEIVGNLIADVLEAPEDAATLERVRGQVAELTKRFPVYG.

(6S)-5,6,7,8-tetrahydrofolate-binding positions include L122 and 126-128 (GHL). K230 is subject to N6-(pyridoxal phosphate)lysine.

It belongs to the SHMT family. Homodimer. Requires pyridoxal 5'-phosphate as cofactor.

The protein localises to the cytoplasm. The catalysed reaction is (6R)-5,10-methylene-5,6,7,8-tetrahydrofolate + glycine + H2O = (6S)-5,6,7,8-tetrahydrofolate + L-serine. The protein operates within one-carbon metabolism; tetrahydrofolate interconversion. It functions in the pathway amino-acid biosynthesis; glycine biosynthesis; glycine from L-serine: step 1/1. Its function is as follows. Catalyzes the reversible interconversion of serine and glycine with tetrahydrofolate (THF) serving as the one-carbon carrier. This reaction serves as the major source of one-carbon groups required for the biosynthesis of purines, thymidylate, methionine, and other important biomolecules. Also exhibits THF-independent aldolase activity toward beta-hydroxyamino acids, producing glycine and aldehydes, via a retro-aldol mechanism. The protein is Serine hydroxymethyltransferase 2 of Burkholderia lata (strain ATCC 17760 / DSM 23089 / LMG 22485 / NCIMB 9086 / R18194 / 383).